The chain runs to 144 residues: Ribosomally synthesized cyclic peptide phomopsin precursor phomA' (144 aa).

The signal sequence occupies residues 1-18 (MRFTPAIVIAAFCSLAVA). 9 propeptides span residues 19 to 35 (APAA…AVED), 42 to 50 (KKRGEAVED), 57 to 65 (KKRGEAVED), 72 to 79 (KRGEAVED), 86 to 94 (KKRGEAVED), 101 to 108 (KRGEAVED), 115 to 123 (KKRGEAVED), 130 to 137 (KRGEAVED), and K144.

In terms of processing, phomA' is processed by several endopeptidases including kexin proteases as well as the cluster-specific S41 family peptidase phomP1' and the peptidase phomG' to produce 5 identical copies of the hexapeptide Tyr-Val-Ile-Pro-Ile-Asp and 3 identical copies of Tyr-Val-Ile-Pro-Phe-Asp, that are further modified into phomapsins A and P, respectively. The timing and order of proteolysis of the phomA' precursor and PTMs are still unknown. Two tyrosinase-like enzyme phomQ1' and PhomQ2, catalyze the chlorination and hydroxylation of Tyr, respectively. PhomYb', is proposed to be involved in the construction of the macrocyclic structure. The other four ustYa family proteins may be involved in PTMs that generate the unique structure of phomopsin A. PhomYa' is required for the hydroxylation of C-beta of Tyr. PhomYc', PhomYd', and PhomYe' are responsible for the biosynthesis of 2,3-dehydroisoleucine (dIle), 2,3-dehydroaspartic acid (dAsp), and 3,4-dehydroproline (dPro), respectively. While dIle formation by phomYc is indispensable for the installation of dAsp by phomYd, the order of the other PTMs have not been elucidated yet. Most of the biosynthetic enzymes likely have broad substrate specificity, and thus, there might be a metabolic grid from a precursor to phomopsin A. The enzyme(s) responsible for the biosynthesis of 3,4-dehydrovaline (dVal) have also not been identified yet. Finally, PhomM' acts as an S-adenosylmethionine-dependent alpha-N-methyltransferase that catalyzes two successive N-methylation reactions, converting N-desmethyl-phomopsin A to phomopsin A and phomopsin A further to an N,N-dimethylated congener called phomopsin E.

It functions in the pathway mycotoxin biosynthesis. Ribosomally synthesized cyclic peptide phomopsin precursor; part of the gene cluster that mediates the biosynthesis of the phomopsins, a group of hexapeptide mycotoxins which infects lupins and causes lupinosis disease in livestock. The phomA' translated product contains a 5-fold repeated peptide embedding the hexapeptide Tyr-Val-Ile-Pro-Ile-Asp and a 3-fold repeated peptide embedding the hexapeptide Tyr-Val-Ile-Pro-Phe-Asp, that is converted into phomapsin A and phomapsin P, respectively. After being excised from the precursor peptide by kexin proteases, the core peptides are cyclized and modified post-translationally by enzymes encoded within the corresponding gene cluster. This Diaporthe leptostromiformis (Lupinosis disease fungus) protein is Ribosomally synthesized cyclic peptide phomopsin precursor phomA'.